Consider the following 1010-residue polypeptide: PHD finger protein 20 (1010 aa).

Tudor domains are found at residues 4–69 (HPPN…RPLE) and 83–147 (GSSE…GNAR). Disordered stretches follow at residues 142–373 (IVGN…EGQL) and 483–609 (EKSP…GKLK). Basic and acidic residues predominate over residues 147 to 246 (RPKETDHKSL…VEKKPEKDLV (100 aa)). S159 carries the post-translational modification Phosphoserine. The a.T hook DNA-binding region spans 257–269 (KRKRGRPPSITPT). The segment covering 267-280 (TPTAVDSNSQTLQP) has biased composition (polar residues). Composition is skewed to basic and acidic residues over residues 292-325 (KRSD…DLSR), 483-493 (EKSPEPEEGPG), and 525-541 (AKEK…ELVR). The C2H2-type zinc finger occupies 455–485 (FRCKVLDCLKFFRKAKLLHYHMKYFHGMEKS). The span at 542 to 554 (VKPKKKKKKKKKT) shows a compositional bias: basic residues. Residues 657 to 703 (RCICEVQEENDFMIQCEECQCWQHGVCMGLLEENVPEKYTCYVCQDP) form a PHD-type zinc finger. The segment at 804–827 (RSEESPSYRTLNGAVEKPSPLPRS) is disordered. An N6-acetyllysine modification is found at K841. Phosphoserine is present on residues S876 and S878. The tract at residues 877 to 902 (LSPRLGWPIDQDRSRGDIDPKPSSPK) is disordered. The span at 886–902 (DQDRSRGDIDPKPSSPK) shows a compositional bias: basic and acidic residues.

In terms of assembly, homodimer; disulfide-linked. Component of some MLL1/MLL complex, at least composed of the core components KMT2A/MLL1, ASH2L, HCFC1, WDR5 and RBBP5, as well as the facultative components BACC1, CHD8, E2F6, HSP70, INO80C, KANSL1, LAS1L, MAX, MCRS1, MGA, MYST1/MOF, PELP1, PHF20, PRP31, RING2, RUVB1/TIP49A, RUVB2/TIP49B, SENP3, TAF1, TAF4, TAF6, TAF7, TAF9 and TEX10. Component of the NSL complex at least composed of MOF/KAT8, KANSL1, KANSL2, KANSL3, MCRS1, PHF20, OGT1/OGT, WDR5 and HCFC1. Post-translationally, ubiquitinated by TRIM26; leading to proteasomal degradation.

The protein localises to the nucleus. In terms of biological role, contributes to methyllysine-dependent p53/TP53 stabilization and up-regulation after DNA damage. Methyllysine-binding protein, component of the MOF histone acetyltransferase protein complex. Not required for maintaining the global histone H4 'Lys-16' acetylation (H4K16ac) levels or locus specific histone acetylation, but instead works downstream in transcriptional regulation of MOF target genes. As part of the NSL complex it may be involved in acetylation of nucleosomal histone H4 on several lysine residues. The protein is PHD finger protein 20 (Phf20) of Mus musculus (Mouse).